Consider the following 347-residue polypeptide: DNA polymerase III subunit delta (347 aa).

It belongs to the DNA polymerase HolA subunit family. In terms of assembly, component of the DNA clamp loading complex consisting of tau(3):delta(1):delta'(1). The DNA polymerase III holoenzyme complex contains at least 10 different subunits organized into 3 functionally essential subassemblies: the Pol III core, the beta sliding clamp processivity factor and the clamp-loading complex. The Pol III core (subunits alpha, epsilon and theta) contains the polymerase and the 3'-5' exonuclease proofreading activities. The polymerase is tethered to the template via the dimeric beta sliding clamp processivity factor. The DNA clamp-loading complex assembles the beta sliding clamp onto the primed template and plays a central role in the organization and communication at the replication fork.

The protein localises to the cytoplasm. It localises to the nucleoid. It catalyses the reaction DNA(n) + a 2'-deoxyribonucleoside 5'-triphosphate = DNA(n+1) + diphosphate. Functionally, part of the beta sliding clamp loading complex, which hydrolyzes ATP to load the beta clamp onto primed DNA to form the DNA replication pre-initiation complex. DNA polymerase III is a complex, multichain enzyme responsible for most of the replicative synthesis in bacteria. This DNA polymerase also exhibits 3'-5' exonuclease activity. The delta subunit is the wrench that will open the beta subunit dimer. The DNA clamp loading complex (tau(3),delta,delta') is thought to load beta dimers onto DNA by binding ATP which alters the complex's conformation so it can bind beta sliding clamp dimers and open them at one interface. Primed DNA is recognized, ATP is hydrolyzed releasing the clamp loading complex and closing the beta sliding clamp ring around the primed DNA. The polypeptide is DNA polymerase III subunit delta (Bacillus subtilis (strain 168)).